The chain runs to 759 residues: Catalase-peroxidase (759 aa).

Residues methionine 1–asparagine 24 form a disordered region. A cross-link (tryptophyl-tyrosyl-methioninium (Trp-Tyr) (with M-268)) is located at residues tryptophan 96–tyrosine 242. Residue histidine 97 is the Proton acceptor of the active site. The tryptophyl-tyrosyl-methioninium (Tyr-Met) (with W-96) cross-link spans tyrosine 242–methionine 268. Histidine 283 lines the heme b pocket.

This sequence belongs to the peroxidase family. Peroxidase/catalase subfamily. As to quaternary structure, homodimer or homotetramer. Heme b serves as cofactor. Formation of the three residue Trp-Tyr-Met cross-link is important for the catalase, but not the peroxidase activity of the enzyme.

It is found in the cytoplasm. The enzyme catalyses H2O2 + AH2 = A + 2 H2O. The catalysed reaction is 2 H2O2 = O2 + 2 H2O. Bifunctional enzyme with both catalase and broad-spectrum peroxidase activity. In Neosartorya fischeri (strain ATCC 1020 / DSM 3700 / CBS 544.65 / FGSC A1164 / JCM 1740 / NRRL 181 / WB 181) (Aspergillus fischerianus), this protein is Catalase-peroxidase.